The chain runs to 238 residues: Ribonuclease PH (238 aa).

Phosphate contacts are provided by residues R86 and 124–126; that span reads GTR.

It belongs to the RNase PH family. As to quaternary structure, homohexameric ring arranged as a trimer of dimers.

It catalyses the reaction tRNA(n+1) + phosphate = tRNA(n) + a ribonucleoside 5'-diphosphate. Its function is as follows. Phosphorolytic 3'-5' exoribonuclease that plays an important role in tRNA 3'-end maturation. Removes nucleotide residues following the 3'-CCA terminus of tRNAs; can also add nucleotides to the ends of RNA molecules by using nucleoside diphosphates as substrates, but this may not be physiologically important. Probably plays a role in initiation of 16S rRNA degradation (leading to ribosome degradation) during starvation. The polypeptide is Ribonuclease PH (Brucella melitensis biotype 2 (strain ATCC 23457)).